A 428-amino-acid chain; its full sequence is MFDYQQPDARGHFGIYGGSFVAETLSHALDELNAAYERYRHDPEFIAEFRNELAHFVGRPSPVYHAARMSREVGGAQIYLKREDLNHTGAHKINNTIGQALLARRMGKPRVIAETGAGQHGVATATICARYGMECVVYMGSEDVKRQSPNVYRMNLLGARVVPVESGSKTLKDALNEAMRDWVTNVENTFYIIGTVAGPHPYPAMVRDFQRVIGDECLVQMPALAGRQPDAVVACVGGGSNAMGIFYPYIPHEGVRLIGVEAAGEGMESGKHSASLQRGSPGVLHGNRTYVLQDANGQITETHSVSAGLDYPGVGPEHAYLKDIGRAEYVGITDAEALQAFHYLCRAEGIIPALESSHAVAYAMKLAKTMRPDQHVLVNLSGRGDKDIGTVADLSGADFYCRPSCRGQSVKGGDPSVVEIQRKAGGVQ.

N6-(pyridoxal phosphate)lysine is present on Lys92.

Belongs to the TrpB family. As to quaternary structure, tetramer of two alpha and two beta chains. Requires pyridoxal 5'-phosphate as cofactor.

The enzyme catalyses (1S,2R)-1-C-(indol-3-yl)glycerol 3-phosphate + L-serine = D-glyceraldehyde 3-phosphate + L-tryptophan + H2O. It functions in the pathway amino-acid biosynthesis; L-tryptophan biosynthesis; L-tryptophan from chorismate: step 5/5. The beta subunit is responsible for the synthesis of L-tryptophan from indole and L-serine. This Leptothrix cholodnii (strain ATCC 51168 / LMG 8142 / SP-6) (Leptothrix discophora (strain SP-6)) protein is Tryptophan synthase beta chain.